The following is an 857-amino-acid chain: Linoleate 9S-lipoxygenase 6 (857 aa).

In terms of domain architecture, PLAT spans 26-156; that stretch reads NALDFTDLAG…RYKSDRIFFA (131 aa). The 699-residue stretch at 159–857 folds into the Lipoxygenase domain; that stretch reads PYLPSETPEL…GKGIPNSVSI (699 aa). Residues 205–243 are disordered; the sequence is NPDQGEQNVRTTLGGSADYPYPRRGRTGRPPTRTDPKSE. A compositionally biased stretch (polar residues) spans 208-218; sequence QGEQNVRTTLG. H518, H523, H709, N713, and I857 together coordinate Fe cation.

This sequence belongs to the lipoxygenase family. In terms of assembly, monomer. Requires Fe cation as cofactor. In terms of tissue distribution, expressed in tubers and roots. Detected in leaves, petioles and stems.

The protein resides in the cytoplasm. It carries out the reaction (9Z,12Z)-octadecadienoate + O2 = (9S)-hydroperoxy-(10E,12Z)-octadecadienoate. The protein operates within lipid metabolism; oxylipin biosynthesis. Plant lipoxygenases may be involved in a number of diverse aspects of plant physiology including growth and development, pest resistance, and senescence or responses to wounding. Catalyzes the hydroperoxidation of lipids containing a cis,cis-1,4-pentadiene structure. Linoleic and linolenic acids are the preferred substrates, but is also active with arachidonic acid. The products are almost exclusively the S enantiomers. The protein is Linoleate 9S-lipoxygenase 6 (LOX1.6) of Solanum tuberosum (Potato).